A 181-amino-acid chain; its full sequence is Keratin-associated protein 4-5 (181 aa).

A run of 26 repeats spans residues 5-9 (CCGSV), 20-24 (CCRPS), 25-29 (CCQTT), 30-34 (CCRTT), 35-39 (CCRPS), 40-44 (CCKPQ), 45-49 (CCQSV), 55-59 (CCHPS), 60-64 (CCISS), 65-69 (CCRPY), 70-74 (CCESS), 75-79 (CCRPC), 80-84 (CCQTT), 85-89 (CCRTT), 90-94 (CCRTT), 95-99 (CCCPS), 100-104 (CCVSS), 105-109 (CCRPQ), 110-114 (CCQSV), 115-119 (CCQPT), 120-124 (CCRPS), 125-129 (CCISS), 130-134 (CCHPS), 135-139 (CCESS), 140-144 (CCRPC), and 145-149 (CCVRP). Residues 5–154 (CCGSVSSEQS…CCVRPVCGRV (150 aa)) are 26 X 5 AA repeats of C-C-[GRQVCHIEK]-[SPTR]-[VSTQYC].

This sequence belongs to the KRTAP type 4 family. In terms of assembly, interacts with hair keratins. In terms of tissue distribution, expressed in the hair follicles.

In terms of biological role, in the hair cortex, hair keratin intermediate filaments are embedded in an interfilamentous matrix, consisting of hair keratin-associated proteins (KRTAP), which are essential for the formation of a rigid and resistant hair shaft through their extensive disulfide bond cross-linking with abundant cysteine residues of hair keratins. The matrix proteins include the high-sulfur and high-glycine-tyrosine keratins. This Homo sapiens (Human) protein is Keratin-associated protein 4-5 (KRTAP4-5).